Reading from the N-terminus, the 448-residue chain is Chromosomal replication initiator protein DnaA (448 aa).

The domain I, interacts with DnaA modulators stretch occupies residues 1–72 (MPDLQELWNY…VEGAYEFAEI (72 aa)). The segment at 72 to 110 (IELTPIFVLPGESDNLTPLEPEEEHVLTKAETPTFLRET) is domain II. Residues 111 to 327 (HLNSKYTFDT…GALVRVQAYA (217 aa)) are domain III, AAA+ region. ATP contacts are provided by Gly155, Gly157, Lys158, and Thr159. A domain IV, binds dsDNA region spans residues 328–448 (TMQNAEITTS…ILDLKNTMKS (121 aa)).

It belongs to the DnaA family. As to quaternary structure, oligomerizes as a right-handed, spiral filament on DNA at oriC.

Its subcellular location is the cytoplasm. Its function is as follows. Plays an essential role in the initiation and regulation of chromosomal replication. ATP-DnaA binds to the origin of replication (oriC) to initiate formation of the DNA replication initiation complex once per cell cycle. Binds the DnaA box (a 9 base pair repeat at the origin) and separates the double-stranded (ds)DNA. Forms a right-handed helical filament on oriC DNA; dsDNA binds to the exterior of the filament while single-stranded (ss)DNA is stabiized in the filament's interior. The ATP-DnaA-oriC complex binds and stabilizes one strand of the AT-rich DNA unwinding element (DUE), permitting loading of DNA polymerase. After initiation quickly degrades to an ADP-DnaA complex that is not apt for DNA replication. Binds acidic phospholipids. The polypeptide is Chromosomal replication initiator protein DnaA (Latilactobacillus sakei subsp. sakei (strain 23K) (Lactobacillus sakei subsp. sakei)).